The following is a 268-amino-acid chain: Undecaprenyl-diphosphatase (268 aa).

The next 7 membrane-spanning stretches (helical) occupy residues 5 to 25 (SIIS…IPVS), 43 to 63 (GNTF…LVYF), 84 to 104 (FSVL…HGFI), 107 to 127 (VLFE…IILY), 184 to 204 (AAEF…ALDL), 213 to 233 (FDDV…GIFV), and 248 to 268 (PFAI…WLLG).

It belongs to the UppP family.

The protein localises to the cell inner membrane. The catalysed reaction is di-trans,octa-cis-undecaprenyl diphosphate + H2O = di-trans,octa-cis-undecaprenyl phosphate + phosphate + H(+). In terms of biological role, catalyzes the dephosphorylation of undecaprenyl diphosphate (UPP). Confers resistance to bacitracin. This Rhizobium meliloti (strain 1021) (Ensifer meliloti) protein is Undecaprenyl-diphosphatase.